Consider the following 382-residue polypeptide: Galactokinase (382 aa).

A substrate-binding site is contributed by 34–37 (EHTD). Residue 124-130 (GAGLSSS) coordinates ATP. Residues serine 130 and glutamate 162 each coordinate Mg(2+). Aspartate 174 acts as the Proton acceptor in catalysis. Tyrosine 223 lines the substrate pocket.

This sequence belongs to the GHMP kinase family. GalK subfamily.

It localises to the cytoplasm. The catalysed reaction is alpha-D-galactose + ATP = alpha-D-galactose 1-phosphate + ADP + H(+). It functions in the pathway carbohydrate metabolism; galactose metabolism. Its function is as follows. Catalyzes the transfer of the gamma-phosphate of ATP to D-galactose to form alpha-D-galactose-1-phosphate (Gal-1-P). In Salmonella schwarzengrund (strain CVM19633), this protein is Galactokinase.